Consider the following 649-residue polypeptide: MAIVALGVVYGDIGTSPLYTMQTFLNGQGGLAHTDRAAVLGILSLVFWSITLITTVKYVFIAMRIDNNGEGGIFALYSLIRKYGAWLAIPAMLGGAAFLADSVLTPAVSISSAVEGLETLPLLEPIMSGNKELTLMITIVIIVCLFAVQSRGTERIGRTFGTVVMIWFSFLAVVGLVNLSSDWSVLEALNPVYGVEFLFSHHNAAGLAVMGTVFLSTTGAEALYSDMGHVGRGNIYFTWPFIKIALVFCYFGQGAWMLNHWDDTAYNHMHGLNPFFEMMTPSVRYVAVLLSVCAGVIASQALITGAYTMVSEATRLNWMPHLQVRYPARTRGQLYIPVVNAVLCVSTLLVLAMFRDSEHISAAYGLALTVTMITTTILLAVYIWHDGKRVGAVVFTVVFLAIQFLFFFASMAKFLHGGWFTMLLTLAILLIMYTWNEGTKLERAQRRHMQPADCVPVLKRLHEDDSIPYFADNIVYLTSDPEMKRVDTDIFFSIFADHPKRARAWWAVSVETSDNPFTREYSVENFGTDFLFRVRIRLGFKVSQSIPAYIHQIMNDLSKSGDLPKQTTRYPKLDADPNIGPIRYVLIHKALMPESKVSQKGAISLQIKYAIRHLAGSPVKWFGLAPYNPLIEIQPLFLATERPPRLKRV.

The next 12 membrane-spanning stretches (helical) occupy residues 1-21 (MAIVALGVVYGDIGTSPLYTM), 42-62 (ILSLVFWSITLITTVKYVFIA), 84-104 (GAWLAIPAMLGGAAFLADSVL), 126-146 (IMSGNKELTLMITIVIIVCLF), 159-179 (TFGTVVMIWFSFLAVVGLVNL), 195-215 (VEFLFSHHNAAGLAVMGTVFL), 235-255 (IYFTWPFIKIALVFCYFGQGA), 286-306 (VAVLLSVCAGVIASQALITGA), 334-354 (LYIPVVNAVLCVSTLLVLAMF), 364-384 (YGLALTVTMITTTILLAVYIW), 390-410 (VGAVVFTVVFLAIQFLFFFAS), and 414-434 (FLHGGWFTMLLTLAILLIMYT).

Belongs to the HAK/KUP transporter (TC 2.A.72) family.

The protein resides in the cell membrane. It catalyses the reaction K(+)(in) + H(+)(in) = K(+)(out) + H(+)(out). In terms of biological role, transport of potassium into the cell. Likely operates as a K(+):H(+) symporter. This chain is Probable potassium transport system protein Kup, found in Bifidobacterium adolescentis (strain ATCC 15703 / DSM 20083 / NCTC 11814 / E194a).